Reading from the N-terminus, the 941-residue chain is MSDQKSADATQARDWRPTVFLPKTSFPMKAGLAKKEPEILARWQKEDLYQQLREQRKGAERFILHDGPPYANGDIHIGHALNKILKDIIMRSQTLLGKDVPYIPGWDCHGLPIEWKVEEQFRKKKLNVDKDVNAVEFRQECRKYAVHWVDTQRQEFKRLGVLGEWDNPYLTMNFEAEAIIAGELMRFSETGQIYRGAKPVLWSVVEKTALAEAEVDYADVDSTTIDLAFKITDSKIPELVGGYAVIWTTTPWTIPANRALAYGPDIDYVLVDLNGKHYLFAEALLEDSLKRIGHEGDAPVLWRGKGAELDGSIAQHPMFEKGGFFAEPRPFLGGSHVTTEAGTGIVHMAPDYGEDDFLLCKAHNIDPVFAVEDDGRYRKDWLWMGGEGLVISPKINAADGPICSDLREVGALLATSVLHHSYPHSWRSKAKLIYRCTPQWFIALDRPVEKGAIAGKTLRETALKAIDEVSWFPAKGKNRIQTMVEGRPDWVISRQRAWGVPITLYVNRESGDYLRDPEVNARILAAFRKEGADAWFKANHQLFLGDKYRLEDYEPVNDILDVWFDSGSTHAFVVEARYGEGTRAQLYLEGSDQHRGWFQSSLLESCGSRGHAPYEAVLTHGFTLDGTGRKMSKSVGNVIDPLKVINESGADILRMWVASTDYNEDVRISKEVLSGTSDGYRKLRNSFRYLLGALEGFSEEEKVDLADLPELEKYILHLLAELDQALHESVNGFAFNRYLRLLSDFVNNDLSAFFFDIRKDRLYCDVGEAAPQGTEERRAYRTVLDILFHALVRYAAPILCFTAEEVWLHRFPDAGSVHLSVWPEVDGQWKNAVLGEKWAVIREQRQIVTEKIEPLRREKIVGSSLEAEVTLPVDAATAKILSSVDFSEICITAKINLVDASDAAITVDRTQNHKCGRCWQHLPEVEEDGALCDRCKSVVGE.

The short motif at 69–79 is the 'HIGH' region element; sequence PYANGDIHIGH. Residue Glu589 coordinates L-isoleucyl-5'-AMP. The 'KMSKS' region motif lies at 630 to 634; the sequence is KMSKS. Lys633 contributes to the ATP binding site. Zn(2+)-binding residues include Cys915, Cys918, Cys932, and Cys935.

It belongs to the class-I aminoacyl-tRNA synthetase family. IleS type 1 subfamily. Monomer. It depends on Zn(2+) as a cofactor.

It localises to the cytoplasm. It carries out the reaction tRNA(Ile) + L-isoleucine + ATP = L-isoleucyl-tRNA(Ile) + AMP + diphosphate. In terms of biological role, catalyzes the attachment of isoleucine to tRNA(Ile). As IleRS can inadvertently accommodate and process structurally similar amino acids such as valine, to avoid such errors it has two additional distinct tRNA(Ile)-dependent editing activities. One activity is designated as 'pretransfer' editing and involves the hydrolysis of activated Val-AMP. The other activity is designated 'posttransfer' editing and involves deacylation of mischarged Val-tRNA(Ile). This is Isoleucine--tRNA ligase from Zymomonas mobilis subsp. mobilis (strain ATCC 31821 / ZM4 / CP4).